Consider the following 157-residue polypeptide: Beta-defensin 125 (157 aa).

Residues 1 to 20 (MNILMLTFIICGLLTQVTKG) form the signal peptide. 3 cysteine pairs are disulfide-bonded: cysteine 27/cysteine 55, cysteine 35/cysteine 49, and cysteine 39/cysteine 56. The segment at 109–157 (GETMTPETNTPETTVPPSETTTPETTMPPSETATSETMPPPSQTALTHN) is disordered. Positions 110-145 (ETMTPETNTPETTVPPSETTTPETTMPPSETATSET) are enriched in low complexity.

This sequence belongs to the beta-defensin family.

Its subcellular location is the secreted. In terms of biological role, has antibacterial activity. This Gorilla gorilla gorilla (Western lowland gorilla) protein is Beta-defensin 125 (DEFB125).